Here is a 451-residue protein sequence, read N- to C-terminus: tRNA-2-methylthio-N(6)-dimethylallyladenosine synthase (451 aa).

The MTTase N-terminal domain maps to 5-121 (RQYHITTFGC…LQDLLEQVEG (117 aa)). 6 residues coordinate [4Fe-4S] cluster: Cys-14, Cys-50, Cys-84, Cys-156, Cys-160, and Cys-163. The Radical SAM core domain occupies 142-379 (RDSTVTAWVN…NHLVAQKAAE (238 aa)). Residues 382-446 (QRYAGRIEEV…AFSLTGEAVE (65 aa)) enclose the TRAM domain.

The protein belongs to the methylthiotransferase family. MiaB subfamily. In terms of assembly, monomer. [4Fe-4S] cluster is required as a cofactor.

It is found in the cytoplasm. It catalyses the reaction N(6)-dimethylallyladenosine(37) in tRNA + (sulfur carrier)-SH + AH2 + 2 S-adenosyl-L-methionine = 2-methylsulfanyl-N(6)-dimethylallyladenosine(37) in tRNA + (sulfur carrier)-H + 5'-deoxyadenosine + L-methionine + A + S-adenosyl-L-homocysteine + 2 H(+). Catalyzes the methylthiolation of N6-(dimethylallyl)adenosine (i(6)A), leading to the formation of 2-methylthio-N6-(dimethylallyl)adenosine (ms(2)i(6)A) at position 37 in tRNAs that read codons beginning with uridine. The polypeptide is tRNA-2-methylthio-N(6)-dimethylallyladenosine synthase (Picosynechococcus sp. (strain ATCC 27264 / PCC 7002 / PR-6) (Agmenellum quadruplicatum)).